We begin with the raw amino-acid sequence, 107 residues long: Proteinase inhibitor I-B (107 aa).

An N-terminal signal peptide occupies residues 1–22; the sequence is MVKFAHVVAFLLLASLFQPLTA. Positions 23-39 are excised as a propeptide; it reads RDLEINVLQLDVSQSGC.

It belongs to the protease inhibitor I13 (potato type I serine protease inhibitor) family.

It localises to the secreted. This Nicotiana tabacum (Common tobacco) protein is Proteinase inhibitor I-B (TIMPA).